We begin with the raw amino-acid sequence, 544 residues long: Prolyl 4-hydroxylase subunit alpha-3 (544 aa).

Residues 1 to 19 (MGPGARLAALLAVLALGTG) form the signal peptide. Residues 107 to 131 (LEASENIRALKDGYEKVEQDLPAFE) are a coiled coil. The TPR repeat unit spans residues 227 to 260 (EDALDHLAFAYFRAGNVSCALSLSREFLLYSPDN). The N-linked (GlcNAc...) asparagine glycan is linked to N242. Residues 422–529 (YAEYLQVVNY…KWVANKWIHE (108 aa)) enclose the Fe2OG dioxygenase domain. Fe cation is bound by residues H440 and D442. N482 carries an N-linked (GlcNAc...) asparagine glycan. H510 provides a ligand contact to Fe cation. K520 contacts 2-oxoglutarate.

This sequence belongs to the P4HA family. Heterotetramer of two alpha-3 chains and two beta chains (the beta chain is the multi-functional PDI). The cofactor is Fe(2+). L-ascorbate is required as a cofactor. Post-translationally, N-glycosylation plays no role in the catalytic activity. As to expression, highly expressed in placenta, liver and fetal skin. Weakly expressed in fetal epiphyseal cartilage, fetal liver, fibroblast, lung and skeletal muscle. Expressed also in fibrous cap of carotid atherosclerotic lesions.

The protein resides in the endoplasmic reticulum lumen. It carries out the reaction L-prolyl-[collagen] + 2-oxoglutarate + O2 = trans-4-hydroxy-L-prolyl-[collagen] + succinate + CO2. Its function is as follows. Catalyzes the post-translational formation of 4-hydroxyproline in -Xaa-Pro-Gly- sequences in collagens and other proteins. This is Prolyl 4-hydroxylase subunit alpha-3 (P4HA3) from Homo sapiens (Human).